Here is a 345-residue protein sequence, read N- to C-terminus: Ribonucleoside-diphosphate reductase subunit beta (345 aa).

3 residues coordinate Fe cation: D88, E118, and H121. The active site involves Y125. Positions 185, 219, and 222 each coordinate Fe cation.

The protein belongs to the ribonucleoside diphosphate reductase small chain family. As to quaternary structure, tetramer of two alpha and two beta subunits. Requires Fe cation as cofactor.

It catalyses the reaction a 2'-deoxyribonucleoside 5'-diphosphate + [thioredoxin]-disulfide + H2O = a ribonucleoside 5'-diphosphate + [thioredoxin]-dithiol. Its function is as follows. Provides the precursors necessary for DNA synthesis. Catalyzes the biosynthesis of deoxyribonucleotides from the corresponding ribonucleotides. This Halalkalibacterium halodurans (strain ATCC BAA-125 / DSM 18197 / FERM 7344 / JCM 9153 / C-125) (Bacillus halodurans) protein is Ribonucleoside-diphosphate reductase subunit beta (nrdB).